Here is a 167-residue protein sequence, read N- to C-terminus: Small ribosomal subunit protein uS5 (167 aa).

An S5 DRBM domain is found at 12–75 (LQEKLITVNR…EKARRNMVTI (64 aa)).

It belongs to the universal ribosomal protein uS5 family. In terms of assembly, part of the 30S ribosomal subunit. Contacts proteins S4 and S8.

Functionally, with S4 and S12 plays an important role in translational accuracy. Its function is as follows. Located at the back of the 30S subunit body where it stabilizes the conformation of the head with respect to the body. The sequence is that of Small ribosomal subunit protein uS5 from Buchnera aphidicola subsp. Schizaphis graminum (strain Sg).